Here is a 139-residue protein sequence, read N- to C-terminus: Large ribosomal subunit protein uL16 (139 aa).

A compositionally biased stretch (basic residues) spans 1 to 17 (MLMPKRVKYRKSQRGRM). The segment at 1-24 (MLMPKRVKYRKSQRGRMKGNSGRG) is disordered.

This sequence belongs to the universal ribosomal protein uL16 family. In terms of assembly, part of the 50S ribosomal subunit.

Its function is as follows. Binds 23S rRNA and is also seen to make contacts with the A and possibly P site tRNAs. The protein is Large ribosomal subunit protein uL16 of Chlorobium limicola (strain DSM 245 / NBRC 103803 / 6330).